We begin with the raw amino-acid sequence, 49 residues long: Large ribosomal subunit protein bL33 (49 aa).

The protein belongs to the bacterial ribosomal protein bL33 family.

This Lactobacillus acidophilus (strain ATCC 700396 / NCK56 / N2 / NCFM) protein is Large ribosomal subunit protein bL33.